The sequence spans 418 residues: Glutamyl-tRNA reductase (418 aa).

Substrate-binding positions include 49–52 (TCNR), Ser-109, 114–116 (EPQ), and Gln-120. The active-site Nucleophile is Cys-50. Position 189–194 (189–194 (GAGETI)) interacts with NADP(+).

The protein belongs to the glutamyl-tRNA reductase family. Homodimer.

The catalysed reaction is (S)-4-amino-5-oxopentanoate + tRNA(Glu) + NADP(+) = L-glutamyl-tRNA(Glu) + NADPH + H(+). It participates in porphyrin-containing compound metabolism; protoporphyrin-IX biosynthesis; 5-aminolevulinate from L-glutamyl-tRNA(Glu): step 1/2. Functionally, catalyzes the NADPH-dependent reduction of glutamyl-tRNA(Glu) to glutamate 1-semialdehyde (GSA). This is Glutamyl-tRNA reductase from Escherichia coli O7:K1 (strain IAI39 / ExPEC).